Here is a 1118-residue protein sequence, read N- to C-terminus: cGMP-specific 3',5'-cyclic phosphodiesterase (1118 aa).

A disordered region spans residues 1–142 (MTDVSSPAGG…KASTTASQQD (142 aa)). The segment covering 18–33 (STTSSSSAATTSASSS) has biased composition (low complexity). Positions 34–45 (KPLTNGANKTAI) are enriched in polar residues. Low complexity-rich tracts occupy residues 46 to 56 (STAAGGVTPGA) and 63 to 72 (GAIPASSSSG). Polar residues predominate over residues 84–101 (SNNNRPAVTNRSSETKLM). The span at 102 to 128 (TPTGSSSSPSQSPSQTQASIQTQTSQQ) shows a compositional bias: low complexity. GAF domains lie at 247 to 399 (DIDV…GIGI) and 431 to 612 (NLEC…GLGI). One can recognise a PDEase domain in the interval 642-965 (SQDQTEKLTQ…RNWQDLAEKV (324 aa)). His718 acts as the Proton donor in catalysis. A divalent metal cation-binding residues include His722, His758, Asp759, and Asp869. 2 disordered regions span residues 1006-1035 (QQSQ…TGAL) and 1065-1118 (SHVS…CALL). 2 stretches are compositionally biased toward basic and acidic residues: residues 1011 to 1022 (GSEDSHTPEHQR) and 1065 to 1075 (SHVSEDMDDKS). Positions 1084–1104 (ASGSMGRMSASSSTSSAGGQM) are enriched in low complexity. Residues 1108–1118 (SKKRSKLCALL) show a composition bias toward basic residues. Position 1115 is a cysteine methyl ester (Cys1115). The S-farnesyl cysteine moiety is linked to residue Cys1115. The propeptide at 1116-1118 (ALL) is removed in mature form.

This sequence belongs to the cyclic nucleotide phosphodiesterase family. Interacts with PrBP. A divalent metal cation serves as cofactor. In terms of tissue distribution, expressed in Malpighian tubule principal cells. Also expressed in adult head.

The protein resides in the cell membrane. The catalysed reaction is 3',5'-cyclic GMP + H2O = GMP + H(+). Its activity is regulated as follows. Inhibited by sildenafil and zaprinast. In terms of biological role, hydrolyzes the second messenger cGMP, which is a key regulator of many important physiological processes. Has cAMP phosphodiesterase activity in vitro but not in vivo. Has a role regulating cGMP transport in Malpighian tubule principal cells. The sequence is that of cGMP-specific 3',5'-cyclic phosphodiesterase (Pde6) from Drosophila melanogaster (Fruit fly).